We begin with the raw amino-acid sequence, 329 residues long: Malate dehydrogenase (329 aa).

Position 11–17 (11–17) interacts with NAD(+); the sequence is GAAGQIA. Substrate is bound by residues Arg-92 and Arg-98. NAD(+)-binding positions include Asn-105, Gln-112, and 129 to 131; that span reads VGN. Residues Asn-131 and Arg-162 each coordinate substrate. His-187 (proton acceptor) is an active-site residue.

It belongs to the LDH/MDH superfamily. MDH type 2 family.

It catalyses the reaction (S)-malate + NAD(+) = oxaloacetate + NADH + H(+). Its function is as follows. Catalyzes the reversible oxidation of malate to oxaloacetate. This Akkermansia muciniphila (strain ATCC BAA-835 / DSM 22959 / JCM 33894 / BCRC 81048 / CCUG 64013 / CIP 107961 / Muc) protein is Malate dehydrogenase.